A 257-amino-acid chain; its full sequence is MTSSSKDMKAGSVLQSSGEERRRGPLDQLPPPANSNKPLTPFSIEDILNKPSVKKSVGSLCPPRVLEKVTGSSASRNGISAPSSPLCALEELASKTFKGLEVSVIQAAEGREHINAFGQRQASKKRRKSRTAFTNHQIYELEKRFLYQKYLSPADRDQIAQQLGLTNAQVITWFQNRRAKLKRDLEEMKADVESLKKIPPQALQKLVSMEDMEDAHGGSGPISPSLSPRAFPQSPSSSRGQTTDEFSEEDEEIEVDD.

A disordered region spans residues 1–43 (MTSSSKDMKAGSVLQSSGEERRRGPLDQLPPPANSNKPLTPFS). A required for convergent extension movement and hypaxial myogenesis during gastrulation. Required for the formation of thick and thin myofilaments. Required for myod1 expression in the pectoral fin bud. Required for continuous expression of cxcl12a in the posterior lateral mesoderm at the tail bud stage and in adaxial cells at the 10-somite stage region spans residues 1–46 (MTSSSKDMKAGSVLQSSGEERRRGPLDQLPPPANSNKPLTPFSIED). The homeobox DNA-binding region spans 126-185 (RRKSRTAFTNHQIYELEKRFLYQKYLSPADRDQIAQQLGLTNAQVITWFQNRRAKLKRDL). Residues 206 to 257 (LVSMEDMEDAHGGSGPISPSLSPRAFPQSPSSSRGQTTDEFSEEDEEIEVDD) are disordered. The span at 233–243 (QSPSSSRGQTT) shows a compositional bias: polar residues. Positions 245-257 (EFSEEDEEIEVDD) are enriched in acidic residues.

In terms of assembly, interacts (via N-terminus) with tle3a/gro2 (via C-terminus).

It localises to the nucleus. Its function is as follows. Transcription factor required in several developmental processes. Involved in axis formation during embryonic development by inhibiting tle3a/gro2 from binding to tcf7l1a, thereby facilitating ctnnb1-mediated transcription of canonical Wnt/CTNNB1 signaling target genes. Regulates convergent extension movements and hypaxial myogenesis during gastrulation by activating non-canonical Wnt signaling via wnt5b. Required for the formation of myofibrils and fusion of fast muscle precursor cells, potentially via transcriptional regulation of genes specific to thick and thin myofilaments. Regulates the migration of the posterior lateral line primordium during embryonic development, possibly via regulation of cxcl12a/sdf1a expression in the posterior lateral mesoderm, thereby modulating the deposition of neuromasts at correct intervals. The chain is Transcription factor LBX2 from Danio rerio (Zebrafish).